The primary structure comprises 607 residues: Elongation factor 4 (607 aa).

Residues 6–188 (SRIRNFSIIA…AIVARIPPPR (183 aa)) form the tr-type G domain. Residues 18-23 (DHGKST) and 135-138 (NKID) each bind GTP.

It belongs to the TRAFAC class translation factor GTPase superfamily. Classic translation factor GTPase family. LepA subfamily.

Its subcellular location is the cell inner membrane. The enzyme catalyses GTP + H2O = GDP + phosphate + H(+). Functionally, required for accurate and efficient protein synthesis under certain stress conditions. May act as a fidelity factor of the translation reaction, by catalyzing a one-codon backward translocation of tRNAs on improperly translocated ribosomes. Back-translocation proceeds from a post-translocation (POST) complex to a pre-translocation (PRE) complex, thus giving elongation factor G a second chance to translocate the tRNAs correctly. Binds to ribosomes in a GTP-dependent manner. This Sphingopyxis alaskensis (strain DSM 13593 / LMG 18877 / RB2256) (Sphingomonas alaskensis) protein is Elongation factor 4.